We begin with the raw amino-acid sequence, 297 residues long: Band 7 protein AAEL010189 (297 aa).

Positions 1 to 13 (MGVVESITNSTKP) are enriched in polar residues. The interval 1-30 (MGVVESITNSTKPGVTKKSSPEAEDDSNGE) is disordered. The helical transmembrane segment at 37 to 57 (ILIFLSWVLVVLTMPFSLLVC) threads the bilayer.

The protein belongs to the band 7/mec-2 family.

Its subcellular location is the membrane. The chain is Band 7 protein AAEL010189 from Aedes aegypti (Yellowfever mosquito).